We begin with the raw amino-acid sequence, 296 residues long: Cell division protein DivIB (296 aa).

Topologically, residues 1 to 25 (MMEDKIIHTPRFDEQRRMRRKKRQR) are cytoplasmic. The chain crosses the membrane as a helical span at residues 26–46 (LQLFIFLSIVAIVSLILIYMF). Residues 47–296 (TSISYVKKIS…KELNQVKKNS (250 aa)) are Extracellular-facing. Residues 50–118 (SYVKKISVND…NTVSINVEEY (69 aa)) form the POTRA domain.

The protein belongs to the FtsQ/DivIB family. DivIB subfamily.

The protein localises to the cell membrane. Its function is as follows. Cell division protein that may be involved in stabilizing or promoting the assembly of the division complex. The chain is Cell division protein DivIB from Macrococcus caseolyticus (strain JCSC5402) (Macrococcoides caseolyticum).